A 259-amino-acid polypeptide reads, in one-letter code: BTB/POZ domain-containing protein KCTD4 (259 aa).

Residues 33 to 134 form the BTB domain; the sequence is TLMTLNVGGY…EVKSRWEKEQ (102 aa).

In Mus musculus (Mouse), this protein is BTB/POZ domain-containing protein KCTD4 (Kctd4).